The chain runs to 233 residues: Uridylate kinase (233 aa).

ATP is bound by residues Lys8–Gly11, Gly51, and Arg55. Residues Asp68 and Thr129–Thr136 each bind UMP. The ATP site is built by Thr156, Tyr162, and Asp165.

It belongs to the UMP kinase family. In terms of assembly, homohexamer.

It localises to the cytoplasm. It carries out the reaction UMP + ATP = UDP + ADP. The protein operates within pyrimidine metabolism; CTP biosynthesis via de novo pathway; UDP from UMP (UMPK route): step 1/1. With respect to regulation, inhibited by UTP. Catalyzes the reversible phosphorylation of UMP to UDP. This is Uridylate kinase from Pseudothermotoga lettingae (strain ATCC BAA-301 / DSM 14385 / NBRC 107922 / TMO) (Thermotoga lettingae).